Here is a 101-residue protein sequence, read N- to C-terminus: Anti-sigma factor RshA (101 aa).

The segment at 1–20 (MSETEREDERWTPPIGPIDP) is disordered. Residues Cys25, His51, Cys55, and Cys58 each contribute to the iron-sulfur cluster site. A Phosphothreonine modification is found at Thr96.

Belongs to the zinc-associated anti-sigma factor (ZAS) superfamily. In terms of assembly, interacts with cognate ECF RNA polymerase sigma factor SigH under reducing conditions; the complex is disrupted under oxiding conditions or as temperatures rise. Binding inhibits the interaction of SigH with the RNA polymerase catalytic core. Requires iron-sulfur cluster as cofactor. Phosphorylated, probably by PknB. Phosphorylation decreases interaction with SigH, probably leading to increased SigH-mediated transcription.

Functionally, a redox-regulated anti-sigma factor for cognate extracytoplasmic function (ECF) sigma factor SigH. ECF sigma factors are held in an inactive form by an anti-sigma factor. Overexpression leads to increased susceptibility to diamide. The sequence is that of Anti-sigma factor RshA (rshA) from Mycolicibacterium smegmatis (strain ATCC 700084 / mc(2)155) (Mycobacterium smegmatis).